Reading from the N-terminus, the 168-residue chain is Small ribosomal subunit protein uS8 (168 aa).

The not found in other S8 sequences stretch occupies residues 59-93; that stretch reads EEYKKMKELAEKSPNPKMKRYLKQLEEYNKGTQYP.

It belongs to the universal ribosomal protein uS8 family. In terms of assembly, part of the 30S ribosomal subunit. Contacts proteins S5 and S12.

Its function is as follows. One of the primary rRNA binding proteins, it binds directly to 16S rRNA central domain where it helps coordinate assembly of the platform of the 30S subunit. The sequence is that of Small ribosomal subunit protein uS8 from Aquifex aeolicus (strain VF5).